The primary structure comprises 556 residues: 2-succinyl-5-enolpyruvyl-6-hydroxy-3-cyclohexene-1-carboxylate synthase (556 aa).

This sequence belongs to the TPP enzyme family. MenD subfamily. As to quaternary structure, homodimer. Requires Mg(2+) as cofactor. It depends on Mn(2+) as a cofactor. Thiamine diphosphate is required as a cofactor.

The enzyme catalyses isochorismate + 2-oxoglutarate + H(+) = 5-enolpyruvoyl-6-hydroxy-2-succinyl-cyclohex-3-ene-1-carboxylate + CO2. It participates in quinol/quinone metabolism; 1,4-dihydroxy-2-naphthoate biosynthesis; 1,4-dihydroxy-2-naphthoate from chorismate: step 2/7. The protein operates within quinol/quinone metabolism; menaquinone biosynthesis. Catalyzes the thiamine diphosphate-dependent decarboxylation of 2-oxoglutarate and the subsequent addition of the resulting succinic semialdehyde-thiamine pyrophosphate anion to isochorismate to yield 2-succinyl-5-enolpyruvyl-6-hydroxy-3-cyclohexene-1-carboxylate (SEPHCHC). The chain is 2-succinyl-5-enolpyruvyl-6-hydroxy-3-cyclohexene-1-carboxylate synthase from Escherichia coli O45:K1 (strain S88 / ExPEC).